The sequence spans 512 residues: CaM kinase-like vesicle-associated protein (512 aa).

The 263-residue stretch at 24 to 286 (YDLGQVIKTE…AEEAISHEWI (263 aa)) folds into the Protein kinase domain. The disordered stretch occupies residues 328–347 (APEQSGTAATQSASDAATPG). Positions 332–347 (SGTAATQSASDAATPG) are enriched in low complexity. Serine 392 carries the post-translational modification Phosphoserine. The disordered stretch occupies residues 393-512 (ADRSATPATD…AQESQRVETS (120 aa)). The segment covering 398 to 439 (TPATDGSATPATDGSVTPATDGSITPATDGSVTPATDRSATP) has biased composition (polar residues). Residue threonine 446 is modified to Phosphothreonine. Positions 449 to 460 (TEESTVPATQSS) are enriched in polar residues. Residues 461-478 (ALPAAKAAATPEPAVAQP) show a composition bias toward low complexity. The residue at position 470 (threonine 470) is a Phosphothreonine.

The protein belongs to the protein kinase superfamily. CAMK Ser/Thr protein kinase family. As to quaternary structure, interacts with calmodulin, in the presence of calcium. The cofactor is Ca(2+).

The protein localises to the cell membrane. Its subcellular location is the cytoplasmic vesicle membrane. Its function is as follows. Does not appear to have detectable kinase activity. The protein is CaM kinase-like vesicle-associated protein (Camkv) of Mus musculus (Mouse).